The sequence spans 886 residues: Putative leucine-rich repeat receptor-like serine/threonine-protein kinase At2g14440 (886 aa).

The N-terminal stretch at 1-23 (METRSKLMLLACATFSIISLVKS) is a signal peptide. Topologically, residues 24–528 (QNQQGFISLY…KHQPKSWLVA (505 aa)) are extracellular. 10 N-linked (GlcNAc...) asparagine glycosylation sites follow: asparagine 49, asparagine 69, asparagine 232, asparagine 236, asparagine 259, asparagine 292, asparagine 434, asparagine 447, asparagine 458, and asparagine 471. 4 LRR repeats span residues 413-436 (RIIS…QNLT), 437-460 (MLRE…QNLT), 461-483 (MLRE…LATI), and 485-507 (PLLV…LQDR). Residues 529-549 (IVASISCVAVTIIVLVLIFIF) form a helical membrane-spanning segment. The Cytoplasmic portion of the chain corresponds to 550-886 (RRRKSSTRKV…TFISDIPSAR (337 aa)). The Protein kinase domain occupies 581-850 (NNFEVVLGKG…NMTRVAHELN (270 aa)). Residues 587 to 595 (LGKGGFGVV) and lysine 608 contribute to the ATP site. Phosphotyrosine is present on tyrosine 653. The active-site Proton acceptor is the aspartate 705. Position 739 is a phosphoserine (serine 739). 2 positions are modified to phosphothreonine: threonine 740 and threonine 745. Residue tyrosine 753 is modified to Phosphotyrosine. Residues 863 to 886 (SQDQNSSKSSGHTVTFISDIPSAR) form a disordered region. The segment covering 865–878 (DQNSSKSSGHTVTF) has biased composition (polar residues).

It belongs to the protein kinase superfamily. Ser/Thr protein kinase family.

Its subcellular location is the cell membrane. It carries out the reaction L-seryl-[protein] + ATP = O-phospho-L-seryl-[protein] + ADP + H(+). The enzyme catalyses L-threonyl-[protein] + ATP = O-phospho-L-threonyl-[protein] + ADP + H(+). The protein is Putative leucine-rich repeat receptor-like serine/threonine-protein kinase At2g14440 of Arabidopsis thaliana (Mouse-ear cress).